The sequence spans 258 residues: Lysine-rich coiled-coil protein 1 (258 aa).

Residues 142 to 258 (DNSTSTHQAS…MLWDQSILGF (117 aa)) form a disordered region. Residues 150–161 (ASHKQIHQKRKR) show a composition bias toward basic residues. Basic and acidic residues-rich tracts occupy residues 162–175 (HPEE…EEWS), 183–213 (CKEI…TEKL), and 220–232 (KGRD…EERK). Positions 211–248 (EKLKNRKEKKGRDVVSKKEERKRTKKKKEQGQERTEEE) form a coiled coil.

The sequence is that of Lysine-rich coiled-coil protein 1 (KRCC1) from Pongo abelii (Sumatran orangutan).